The following is a 172-amino-acid chain: Propanediol dehydratase small subunit (172 aa).

This sequence belongs to the diol/glycerol dehydratase small subunit family. The propanediol dehydratase enzyme is a heterotrimeric complex composed of a large (PduC), a medium (PduD) and a small (PduE) subunit. Adenosylcob(III)alamin is required as a cofactor.

Its subcellular location is the bacterial microcompartment. The catalysed reaction is propane-1,2-diol = propanal + H2O. It functions in the pathway polyol metabolism; 1,2-propanediol degradation. Part of the PduCDE complex that catalyzes the dehydration of 1,2-propanediol (1,2-PD) to propionaldehyde. Localized in the bacterial microcompartment (BMC) dedicated to 1,2-PD degradation. In terms of biological role, expression of a cosmid containing the full 21-gene pdu operon in E.coli allows E.coli to grow on 1,2-propanediol (1,2-PD) with the appearance of BMCs in its cytoplasm. Its function is as follows. The 1,2-PD-specific bacterial microcompartment (BMC) concentrates low levels of 1,2-PD catabolic enzymes, concentrates volatile reaction intermediates thus enhancing pathway flux and keeps the level of toxic, mutagenic propionaldehyde low. The chain is Propanediol dehydratase small subunit from Citrobacter freundii.